An 872-amino-acid polypeptide reads, in one-letter code: Alanine--tRNA ligase (872 aa).

Zn(2+) is bound by residues H566, H570, C668, and H672.

The protein belongs to the class-II aminoacyl-tRNA synthetase family. Zn(2+) serves as cofactor.

It localises to the cytoplasm. The catalysed reaction is tRNA(Ala) + L-alanine + ATP = L-alanyl-tRNA(Ala) + AMP + diphosphate. In terms of biological role, catalyzes the attachment of alanine to tRNA(Ala) in a two-step reaction: alanine is first activated by ATP to form Ala-AMP and then transferred to the acceptor end of tRNA(Ala). Also edits incorrectly charged Ser-tRNA(Ala) and Gly-tRNA(Ala) via its editing domain. In Lactococcus lactis subsp. cremoris (strain SK11), this protein is Alanine--tRNA ligase.